Reading from the N-terminus, the 179-residue chain is MNRLKEKYIKEVTPSLVEKFNYSSVMQTPKVDKIVINMGVGDAVSNAKNLDKAVEELALITGQKPLITKAKKSIAGFRLREGMPIGAKVTLRGERMYEFLDKLVTVSLPRVRDFHGVSKKAFDGRGNYTLGIKEQLIFPEVDYDLVDKVRGMDIVIVTTANTDEESRELLAQLGMPFQK.

It belongs to the universal ribosomal protein uL5 family. Part of the 50S ribosomal subunit; part of the 5S rRNA/L5/L18/L25 subcomplex. Contacts the 5S rRNA and the P site tRNA. Forms a bridge to the 30S subunit in the 70S ribosome.

In terms of biological role, this is one of the proteins that bind and probably mediate the attachment of the 5S RNA into the large ribosomal subunit, where it forms part of the central protuberance. In the 70S ribosome it contacts protein S13 of the 30S subunit (bridge B1b), connecting the 2 subunits; this bridge is implicated in subunit movement. Contacts the P site tRNA; the 5S rRNA and some of its associated proteins might help stabilize positioning of ribosome-bound tRNAs. This is Large ribosomal subunit protein uL5 from Enterococcus faecalis (strain ATCC 700802 / V583).